A 122-amino-acid polypeptide reads, in one-letter code: Putative 2'-deoxynucleoside 5'-phosphate N-hydrolase 1 (122 aa).

Substrate is bound by residues 4-10 (FLSGSIR), Tyr19, His37, Glu83, and 105-107 (SAM).

Belongs to the 2'-deoxynucleoside 5'-phosphate N-hydrolase 1 family. Monomer and homodimer.

The enzyme catalyses a pyrimidine 2'-deoxyribonucleoside 5'-phosphate + H2O = a pyrimidine nucleobase + 2-deoxy-D-ribose 5-phosphate. It catalyses the reaction a purine 2'-deoxyribonucleoside 5'-phosphate + H2O = a purine nucleobase + 2-deoxy-D-ribose 5-phosphate. Functionally, catalyzes the cleavage of the N-glycosidic bond of deoxyribonucleoside 5'-monophosphates to yield deoxyribose 5-phosphate and a purine or pyrimidine base. This is Putative 2'-deoxynucleoside 5'-phosphate N-hydrolase 1 from Methanococcoides burtonii (strain DSM 6242 / NBRC 107633 / OCM 468 / ACE-M).